A 60-amino-acid polypeptide reads, in one-letter code: uncharacterized protein (60 aa).

The protein to E.coli YjeQ and H.influenzae HI_1714.

This is an uncharacterized protein from Azotobacter vinelandii.